The following is a 476-amino-acid chain: Siroheme synthase 1 (476 aa).

Residues 1-203 form a precorrin-2 dehydrogenase /sirohydrochlorin ferrochelatase region; sequence MDYLPIFADL…GQTAEAQRQL (203 aa). NAD(+)-binding positions include 22 to 23 and 43 to 44; these read EV and QS. The residue at position 128 (Ser128) is a Phosphoserine. The tract at residues 219-476 is uroporphyrinogen-III C-methyltransferase; it reads GEIALVGAGP…VSRPAVVNLA (258 aa). S-adenosyl-L-methionine is bound at residue Pro228. Asp251 acts as the Proton acceptor in catalysis. The Proton donor role is filled by Lys273. Residues 304-306, Ile309, 334-335, Met386, and Gly415 each bind S-adenosyl-L-methionine; these read GGD and TA.

In the N-terminal section; belongs to the precorrin-2 dehydrogenase / sirohydrochlorin ferrochelatase family. It in the C-terminal section; belongs to the precorrin methyltransferase family.

It carries out the reaction uroporphyrinogen III + 2 S-adenosyl-L-methionine = precorrin-2 + 2 S-adenosyl-L-homocysteine + H(+). The catalysed reaction is precorrin-2 + NAD(+) = sirohydrochlorin + NADH + 2 H(+). It catalyses the reaction siroheme + 2 H(+) = sirohydrochlorin + Fe(2+). The protein operates within cofactor biosynthesis; adenosylcobalamin biosynthesis; precorrin-2 from uroporphyrinogen III: step 1/1. Its pathway is cofactor biosynthesis; adenosylcobalamin biosynthesis; sirohydrochlorin from precorrin-2: step 1/1. It participates in porphyrin-containing compound metabolism; siroheme biosynthesis; precorrin-2 from uroporphyrinogen III: step 1/1. It functions in the pathway porphyrin-containing compound metabolism; siroheme biosynthesis; siroheme from sirohydrochlorin: step 1/1. The protein operates within porphyrin-containing compound metabolism; siroheme biosynthesis; sirohydrochlorin from precorrin-2: step 1/1. In terms of biological role, multifunctional enzyme that catalyzes the SAM-dependent methylations of uroporphyrinogen III at position C-2 and C-7 to form precorrin-2 via precorrin-1. Then it catalyzes the NAD-dependent ring dehydrogenation of precorrin-2 to yield sirohydrochlorin. Finally, it catalyzes the ferrochelation of sirohydrochlorin to yield siroheme. This Serratia proteamaculans (strain 568) protein is Siroheme synthase 1.